The following is a 61-amino-acid chain: Double gene block protein 1 (61 aa).

The interval 1-45 is disordered; sequence MDIESEVPVVGKQMLAGNRGKQKTRRSVAKDAIRKPASDSTNGGN. The segment at 17–35 is RNA-binding; it reads GNRGKQKTRRSVAKDAIRK. The span at 28-37 shows a compositional bias: basic and acidic residues; it reads VAKDAIRKPA.

Belongs to the carmovirus double gene block protein 1 family. Homodimer.

Cell-to-cell movement. Displays RNA-binding activity. The protein is Double gene block protein 1 of Carnation mottle virus (CarMV).